The chain runs to 566 residues: Lamin-1 (566 aa).

Positions 1 to 37 are disordered; sequence MSSRKGTRSSRIVTLERSANSSLSNNGGGDDSFGSTL. At S2 the chain carries N-acetylserine. Residues 13–47 are head; that stretch reads VTLERSANSSLSNNGGGDDSFGSTLLETSRLQEKD. The IF rod domain maps to 45–387; that stretch reads EKDHLTSLNS…ALLEGEEERL (343 aa). A coil 1A region spans residues 48-82; it reads HLTSLNSRLATYIDKVRQLEQENNRLQVQIRDIEV. Residues 83-94 form a linker 1 region; that stretch reads VEKKEKSNLADR. The tract at residues 95-228 is coil 1B; the sequence is FEAEKARLRR…AFALQQHKGE (134 aa). The tract at residues 229-256 is linker 2; the sequence is LEEVRHKRQVDMTTYAKQINDEYQSKLQ. A coil 2 region spans residues 257–385; it reads DQIEEMRAQF…YQALLEGEEE (129 aa). A tail region spans residues 386–566; it reads RLNLTQEAPQ…SDPADRCSIM (181 aa). In terms of domain architecture, LTD spans 435 to 550; it reads RRSKLNKETV…DTVSSITVEF (116 aa). A disordered region spans residues 528 to 566; that stretch reads GDNPSARLEDSEGDTVSSITVEFSESSDPSDPADRCSIM. Polar residues predominate over residues 541–556; the sequence is DTVSSITVEFSESSDP. C563 bears the Cysteine methyl ester mark. C563 carries the S-farnesyl cysteine lipid modification. Residues 564–566 constitute a propeptide, removed in mature form; it reads SIM.

Belongs to the intermediate filament family. Interacts with LEM domain proteins lem-2 and emr-1. May interact with unc-84; this interaction may be required to complete the connection between the nuclear lamina and the cytoskeleton. In terms of tissue distribution, ubiquitous. Expressed in all cells, except in cells undergoing spermatogenesis.

The protein resides in the nucleus envelope. Its subcellular location is the nucleus inner membrane. In terms of biological role, major component of the nuclear lamina, a fibrous layer on the nucleoplasmic side of the inner nuclear membrane. Provides a framework for the nuclear envelope and probably also interacts with chromatin. Essential to maintain the shape and integrity of the nucleus, and for DNA replication. Involved in spatial organization of nuclear pore complexes. It is not a target for ced-3 during apoptosis, suggesting that lamin cleavage is not essential for apoptosis in C.elegans. The polypeptide is Lamin-1 (Caenorhabditis elegans).